The chain runs to 492 residues: N-succinylglutamate 5-semialdehyde dehydrogenase (492 aa).

220-225 (GRANTG) contacts NAD(+). Catalysis depends on residues glutamate 243 and cysteine 277.

This sequence belongs to the aldehyde dehydrogenase family. AstD subfamily.

It carries out the reaction N-succinyl-L-glutamate 5-semialdehyde + NAD(+) + H2O = N-succinyl-L-glutamate + NADH + 2 H(+). It participates in amino-acid degradation; L-arginine degradation via AST pathway; L-glutamate and succinate from L-arginine: step 4/5. In terms of biological role, catalyzes the NAD-dependent reduction of succinylglutamate semialdehyde into succinylglutamate. In Shigella boydii serotype 18 (strain CDC 3083-94 / BS512), this protein is N-succinylglutamate 5-semialdehyde dehydrogenase.